The chain runs to 85 residues: Translation initiation factor IF-1 1 (85 aa).

An S1-like domain is found at 1–72; sequence MSKEDLIEMQ…NKGRLTFRHI (72 aa).

This sequence belongs to the IF-1 family. In terms of assembly, component of the 30S ribosomal translation pre-initiation complex which assembles on the 30S ribosome in the order IF-2 and IF-3, IF-1 and N-formylmethionyl-tRNA(fMet); mRNA recruitment can occur at any time during PIC assembly.

It localises to the cytoplasm. Its function is as follows. One of the essential components for the initiation of protein synthesis. Stabilizes the binding of IF-2 and IF-3 on the 30S subunit to which N-formylmethionyl-tRNA(fMet) subsequently binds. Helps modulate mRNA selection, yielding the 30S pre-initiation complex (PIC). Upon addition of the 50S ribosomal subunit IF-1, IF-2 and IF-3 are released leaving the mature 70S translation initiation complex. The chain is Translation initiation factor IF-1 1 from Paracidovorax citrulli (strain AAC00-1) (Acidovorax citrulli).